A 96-amino-acid polypeptide reads, in one-letter code: Aspartyl/glutamyl-tRNA(Asn/Gln) amidotransferase subunit C (96 aa).

The protein belongs to the GatC family. As to quaternary structure, heterotrimer of A, B and C subunits.

It catalyses the reaction L-glutamyl-tRNA(Gln) + L-glutamine + ATP + H2O = L-glutaminyl-tRNA(Gln) + L-glutamate + ADP + phosphate + H(+). The catalysed reaction is L-aspartyl-tRNA(Asn) + L-glutamine + ATP + H2O = L-asparaginyl-tRNA(Asn) + L-glutamate + ADP + phosphate + 2 H(+). Functionally, allows the formation of correctly charged Asn-tRNA(Asn) or Gln-tRNA(Gln) through the transamidation of misacylated Asp-tRNA(Asn) or Glu-tRNA(Gln) in organisms which lack either or both of asparaginyl-tRNA or glutaminyl-tRNA synthetases. The reaction takes place in the presence of glutamine and ATP through an activated phospho-Asp-tRNA(Asn) or phospho-Glu-tRNA(Gln). The sequence is that of Aspartyl/glutamyl-tRNA(Asn/Gln) amidotransferase subunit C from Sulfurimonas denitrificans (strain ATCC 33889 / DSM 1251) (Thiomicrospira denitrificans (strain ATCC 33889 / DSM 1251)).